A 68-amino-acid polypeptide reads, in one-letter code: Adipokinetic prohormone type 1 (68 aa).

Residues 1-20 form the signal peptide; it reads MNYVSIFVLIVACLCVLADA. Pyrrolidone carboxylic acid is present on Gln21. Gly30 carries the glycine amide modification. Residues 34 to 68 constitute a propeptide that is removed on maturation; sequence GAVAATMSCRSEETIAAIYKLIQNEAERLLLCQKP.

Expressed in antennal lobe (AL), corpora cardiaca (CC), corpora allata (CA) and gnathal ganglion (GNG) (at protein level). Expression in CC and CA detected in all animals, expression in GNG in some animals and in AL in few animals (at protein level).

The protein localises to the secreted. In terms of biological role, this hormone, released from cells in the corpora cardiaca, causes release of diglycerides from the fat body and stimulation of muscles to use these diglycerides as an energy source during energy-demanding processes. The protein is Adipokinetic prohormone type 1 of Agrotis ipsilon (Black cutworm moth).